The primary structure comprises 369 residues: Protein DUF642 L-GALACTONO-1,4-LACTONE-RESPONSIVE GENE 2 (369 aa).

The first 19 residues, Met-1–Ala-19, serve as a signal peptide directing secretion. Residue Asn-125 is glycosylated (N-linked (GlcNAc...) asparagine).

Expressed in roots, seedlings and leaves.

It localises to the secreted. Its subcellular location is the cell wall. Functionally, involved in the regulation of testa rupture during seed germination. Required during roots and rosettes development. The sequence is that of Protein DUF642 L-GALACTONO-1,4-LACTONE-RESPONSIVE GENE 2 from Arabidopsis thaliana (Mouse-ear cress).